Here is a 932-residue protein sequence, read N- to C-terminus: Protocadherin gamma-A3 (932 aa).

The signal sequence occupies residues 1-29 (MTNCLSFRNGRGLALLCALLGTLCETGSG). 6 consecutive Cadherin domains span residues 30 to 133 (QIRY…APNF), 134 to 242 (PTEE…PPMF), 243 to 347 (TQPE…APEI), 348 to 452 (TITS…PPTF), 453 to 562 (PHLS…APEI), and 570 to 682 (DGST…EPSA). The Extracellular portion of the chain corresponds to 30 to 692 (QIRYSVSEEL…KPNDSDLTLY (663 aa)). Residues Asn265, Asn419, and Asn545 are each glycosylated (N-linked (GlcNAc...) asparagine). Residue Asn685 is glycosylated (N-linked (GlcNAc...) asparagine). Residues 693–713 (LVVAVAAVSCVFLAFVIVLLA) traverse the membrane as a helical segment. The Cytoplasmic portion of the chain corresponds to 714-932 (LRLRRWHKSR…KKKSGKKEKK (219 aa)). Disordered stretches follow at residues 805–841 (NLLQ…WPNN) and 902–932 (ATLT…KEKK). Positions 922 to 932 (NKKKSGKKEKK) are enriched in basic residues.

It is found in the cell membrane. Potential calcium-dependent cell-adhesion protein. May be involved in the establishment and maintenance of specific neuronal connections in the brain. This is Protocadherin gamma-A3 (PCDHGA3) from Homo sapiens (Human).